The primary structure comprises 297 residues: Beta-1,3-galactosyltransferase 5 (297 aa).

The Cytoplasmic segment spans residues 1-7; sequence MAFPKMR. Residues 8–28 form a helical; Signal-anchor for type II membrane protein membrane-spanning segment; the sequence is LMYVCLLVLGALCVYFSMYSL. Residues 29–297 are Lumenal-facing; sequence NLFKEQSFVY…KPRTLLDYWQ (269 aa). 3 N-linked (GlcNAc...) asparagine glycosylation sites follow: N130, N174, and N231.

This sequence belongs to the glycosyltransferase 31 family.

The protein localises to the golgi apparatus membrane. It carries out the reaction a globoside Gb4Cer (d18:1(4E)) + UDP-alpha-D-galactose = a globoside GalGb4Cer (d18:1(4E)) + UDP + H(+). It participates in protein modification; protein glycosylation. Functionally, catalyzes the transfer of Gal to GlcNAc-based acceptors with a preference for the core3 O-linked glycan GlcNAc(beta1,3)GalNAc structure. Can use glycolipid LC3Cer as an efficient acceptor. This Pan troglodytes (Chimpanzee) protein is Beta-1,3-galactosyltransferase 5 (B3GALT5).